A 4293-amino-acid chain; its full sequence is Polycystin-1 (4293 aa).

An N-terminal signal peptide occupies residues 1–23 (MPLGAPALLALALGLGLWLGALA). The region spanning 24–67 (GDPGRGCGPCPLPCFCGPAPDAACRVNCSGRWLQTLGPSLRIPA) is the LRRNT domain. The Extracellular segment spans residues 24-3066 (GDPGRGCGPC…IFPEPSASIN (3043 aa)). N-linked (GlcNAc...) asparagine glycans are attached at residues Asn-50 and Asn-89. LRR repeat units follow at residues 68-91 (DATALDLSHNLLQTLDIGLLVNLS) and 92-113 (ALVELDLSNNRISTLEEGVFAN). N-linked (GlcNAc...) asparagine glycosylation is found at Asn-116 and Asn-121. One can recognise an LRRCT domain in the interval 125-178 (NPFECNCGLAWLPRWAKEHQVHVVQSEATTCRGPIPLAGQPLLSIPLLDNACGE). The region spanning 177–271 (GEEYVACLPD…PTLLQHTFPA (95 aa)) is the WSC domain. Asn-187 and Asn-239 each carry an N-linked (GlcNAc...) asparagine glycan. In terms of domain architecture, PKD 1 spans 272–359 (SPGATLVGPH…VQVEATPTVL (88 aa)). N-linked (GlcNAc...) asparagine glycosylation is present at Asn-370. The 116-residue stretch at 415–530 (GNGHCYRLVA…CSAPHSYVCE (116 aa)) folds into the C-type lectin domain. Cystine bridges form between Cys-436–Cys-529 and Cys-507–Cys-521. The interval 613–632 (GGAAAVPEGSSEPDNRTEPA) is disordered. A glycan (N-linked (GlcNAc...) asparagine) is linked at Asn-627. The region spanning 633–666 (PKCVPEELWCPGANVCIPFDASCNSHVCINGSVS) is the LDL-receptor class A; atypical domain. 2 disulfide bridges follow: Cys-635/Cys-648 and Cys-642/Cys-660. Residues Asn-662, Asn-740, Asn-804, Asn-835, Asn-848, Asn-859, Asn-884, Asn-915, Asn-998, Asn-1004, Asn-1028, Asn-1084, Asn-1096, Asn-1107, Asn-1172, Asn-1188, Asn-1234, Asn-1263, Asn-1330, Asn-1342, Asn-1376, Asn-1444, Asn-1449, Asn-1468, Asn-1535, Asn-1548, Asn-1557, Asn-1643, Asn-1657, Asn-1706, Asn-1730, Asn-1788, Asn-1831, Asn-1863, and Asn-1876 are each glycosylated (N-linked (GlcNAc...) asparagine). PKD domains are found at residues 849–922 (ATAT…RVTA), 929–1014 (LRAV…NKMH), 1017–1123 (WVSA…LPNV), 1121–1209 (PNVA…LHGL), 1207–1292 (HGLT…EVLH), 1288–1377 (LEVL…IRNI), 1376–1463 (NITL…VLVT), 1462–1545 (VTGI…VRGL), 1544–1629 (GLTI…IEGL), 1630–1718 (QVAG…VESL), 1716–1802 (ESLI…VGGL), 1804–1886 (IRTS…IVNL), 1885–1970 (NLML…VVGL), 1972–2053 (VPNC…MVEV), and 2056–2144 (IIQY…ACRE). Residues Asn-1987, Asn-2046, Asn-2070, Asn-2121, Asn-2244, Asn-2349, Asn-2391, Asn-2408, Asn-2414, Asn-2563, Asn-2640, Asn-2713, Asn-2749, Asn-2813, Asn-2836, Asn-2873, Asn-2948, and Asn-2986 are each glycosylated (N-linked (GlcNAc...) asparagine). An REJ domain is found at 2142–2828 (CREPEVEVAL…QLIFLVDSNP (687 aa)). A GAIN-B domain is found at 2857–3055 (PIEQLAAERA…SLFVPPSHVQ (199 aa)). A disulfide bond links Cys-3007 and Cys-3035. Residues 3007-3055 (CQYFSEEMMMWRTEGIVPLEETSPSQAVCLTRHLTAFGASLFVPPSHVQ) are GPS. The helical transmembrane segment at 3067 to 3087 (YIVLLTCVICLVTYVVMAMIL) threads the bilayer. Residues 3088 to 3269 (RKLDQLDVSR…DRPPRSRFTR (182 aa)) lie on the Cytoplasmic side of the membrane. In terms of domain architecture, PLAT spans 3110 to 3225 (FKYEILVKTG…EANGGLVEKE (116 aa)). Residues 3270-3290 (VQRVTCCVLLLCLFLAANAVW) traverse the membrane as a helical segment. Residues 3291–3315 (YGVVRDTTYSMGPVSSLISPGVDTV) are Extracellular-facing. Residues 3316 to 3336 (AIGLVSSVVVYPVYLAVLFLF) form a helical membrane-spanning segment. Topologically, residues 3337–3549 (RMSRSKVSGD…LPAWCAPLAH (213 aa)) are cytoplasmic. Residues 3550–3570 (GLSLLLVAVAVAVSGWIGASF) form a helical membrane-spanning segment. Topologically, residues 3571 to 3572 (PP) are extracellular. A helical transmembrane segment spans residues 3573–3593 (SVSVMWLLSSSSSFLASFLGW). The Cytoplasmic segment spans residues 3594-3655 (EPLKVLLEAL…LAKEEARKVK (62 aa)). Residues 3656–3676 (RLHDMLKRLLVYMLFLLVTLL) traverse the membrane as a helical segment. The Extracellular portion of the chain corresponds to 3677 to 3891 (ANYGDASCHG…RLSTGLSLPL (215 aa)). Residues Asn-3728 and Asn-3780 are each glycosylated (N-linked (GlcNAc...) asparagine). Residues 3892–3912 (LTSVCLLLFALYFSMAEVQTW) form a helical membrane-spanning segment. Topologically, residues 3913–3925 (RKDGCACTARPDT) are cytoplasmic. The helical transmembrane segment at 3926 to 3946 (WARCLLVILTAATGLVRLAQL) threads the bilayer. The Extracellular portion of the chain corresponds to 3947 to 3974 (GIADRQWTHFVQDHPRHFTSFDQVAQLG). A helical transmembrane segment spans residues 3975 to 3995 (SVARGLAASLLFLLLVKAAQQ). The Cytoplasmic segment spans residues 3996 to 4017 (LRFVRQWSVFGKTLCRALPELM). Residues 4018–4038 (GATLGLVLLGVAYAQMAILLI) form a helical membrane-spanning segment. The Extracellular segment spans residues 4039-4080 (SSGADTLYNMARAFLVLCPGARVPTLCPSESWYLSPLLCVGL). Residues 4081-4100 (WALRVWGALRLGAILLRWRY) traverse the membrane as a helical segment. The Cytoplasmic segment spans residues 4101 to 4293 (HALRGELYRP…PNNKVHPSST (193 aa)). Disordered regions lie at residues 4150–4197 (PLPS…STLK) and 4235–4293 (SLQG…PSST). Residues 4153–4172 (SRSSRGSKSSPVVLPPSSGS) are compositionally biased toward low complexity. Ser-4156 carries the phosphoserine; by PRKX; in vitro modification. The span at 4173 to 4195 (EASHPSTSSSQPDGPSASLSRST) shows a compositional bias: polar residues. The stretch at 4210–4241 (ESLLVQFDRLNQATEDVYQLEQQLQSLQGHGH) forms a coiled coil. Residues 4238–4256 (GHGHNGPPSSPSPGCFPGS) are compositionally biased toward low complexity. The segment covering 4265–4276 (SRASQGLDQTVG) has biased composition (polar residues).

This sequence belongs to the polycystin family. Component of the heterotetrameric polycystin channel complex with PKD2; the tetramer contains one PKD1 chain and three PKD2 chains. Interacts with PKD2; the interaction is required for ciliary localization. Interacts with PKD2L1. Interacts with PRKX; involved in differentiation and controlled morphogenesis of the kidney. Interacts (via extracellular domain) with WNT3A, WNT4 and WNT9B. Interacts with WNT5A, DVL1 and DVL2. Interacts with NPHP1 (via SH3 domain). Interacts with BBS1, BBS4, BBS5 and TTC8. Interacts with RGS7. Interacts (via C-terminal domain) with RABEP1; the interaction connects PKD1:PKD2 to GGA1 and ARL3 that mediate the ciliary targeting. Interacts (via the PKD repeats in the N-terminal extracellular region) with EPCIP; the interaction is not dependent on N-glycosylation of either protein. Post-translationally, N-glycosylated. After synthesis, undergoes autoproteolytic cleavage between Leu-3040 and Thr-3041 in the GPS region of the GAIN-B domain. Cleavage at the GPS region occurs through a cis-autoproteolytic mechanism involving an ester-intermediate via N-O acyl rearrangement. This process takes place in the early secretory pathway, depends on initial N-glycosylation, and requires the REJ domain. PKD1 is ubiquitously and incompletely cleaved in wild-type mice, so that uncleaved and cleaved PKD1 molecules coexist. The differential patterns of cleavage during embryonic development, as well as in adult mice, suggest different functions of uncleaved and cleaved molecules.

It is found in the cell membrane. Its subcellular location is the cell projection. The protein resides in the cilium. It localises to the endoplasmic reticulum. The protein localises to the golgi apparatus. It is found in the vesicle. Its subcellular location is the secreted. The protein resides in the extracellular exosome. Functionally, component of a heteromeric calcium-permeable ion channel formed by PKD1 and PKD2 that is activated by interaction between PKD1 and a Wnt family member, such as WNT3A and WNT9B. Both PKD1 and PKD2 are required for channel activity. Involved in renal tubulogenesis. Involved in fluid-flow mechanosensation by the primary cilium in renal epithelium. Acts as a regulator of cilium length, together with PKD2. The dynamic control of cilium length is essential in the regulation of mechanotransductive signaling. The cilium length response creates a negative feedback loop whereby fluid shear-mediated deflection of the primary cilium, which decreases intracellular cAMP, leads to cilium shortening and thus decreases flow-induced signaling. May be an ion-channel regulator. Involved in adhesive protein-protein and protein-carbohydrate interactions. Likely to be involved with polycystin-1-interacting protein 1 in the detection, sequestration and exocytosis of senescent mitochondria. This chain is Polycystin-1, found in Mus musculus (Mouse).